Reading from the N-terminus, the 319-residue chain is mRNA decay activator protein ZFP36 (319 aa).

Residues Met-1 to His-15 are necessary for nuclear export. The necessary and sufficient for the association with mRNA decay enzymes and mRNA decay activation stretch occupies residues Met-1–Thr-92. 2 necessary for localization of ARE-containing mRNAs to processing bodies (PBs) regions span residues Met-1–Leu-166 and Thr-92–Glu-319. Phosphoserine; by MAPKAPK2 is present on Ser-52. Phosphoserine is present on Ser-58. Residues Pro-63 to Gly-67 form a P-P-P-P-G repeat. Over residues Pro-65–Thr-84 the composition is skewed to pro residues. The disordered stretch occupies residues Pro-65 to Arg-95. Residues Ser-80 and Ser-82 each carry the phosphoserine modification. At Thr-84 the chain carries Phosphothreonine. Ser-85 bears the Phosphoserine mark. The segment covering Ser-85–Ser-94 has biased composition (low complexity). Residues Thr-87 to Pro-160 form a necessary for nuclear localization region. Residues Thr-89 to Ala-165 are necessary for RNA-binding. 2 C3H1-type zinc fingers span residues Arg-95–Gly-123 and Lys-133–Thr-161. Residues Arg-95–Arg-186 form a necessary for interaction with PABPN1 region. Residues Leu-166 to Glu-319 are necessary for mRNA decay activation. Phosphoserine; by MAPKAPK2 is present on Ser-178. Low complexity predominate over residues Phe-179–Ser-188. The tract at residues Phe-179–Leu-309 is disordered. Ser-189 is modified (phosphoserine). Residues Pro-190–Gly-194 form a P-P-P-P-G repeat. The segment covering Ser-196–Ser-208 has biased composition (low complexity). Ser-210 carries the post-translational modification Phosphoserine. Residues Pro-211–Gly-215 form a P-P-P-P-G repeat. Position 220 is a phosphoserine; by MAPK1; in vitro (Ser-220). At Thr-250 the chain carries Phosphothreonine. Residues Ser-269, Ser-289, and Ser-316 each carry the phosphoserine modification. Positions Ser-279–Ser-289 are enriched in low complexity. The interval Pro-305–Glu-319 is interaction with CNOT1.

Associates with cytoplasmic CCR4-NOT and PAN2-PAN3 deadenylase complexes to trigger ARE-containing mRNA deadenylation and decay processes. Part of a mRNA decay activation complex at least composed of poly(A)-specific exoribonucleases CNOT6, EXOSC2 and XRN1 and mRNA-decapping enzymes DCP1A and DCP2. Associates with the RNA exosome complex. Interacts (via phosphorylated form) with 14-3-3 proteins; these interactions promote exclusion of ZFP36 from cytoplasmic stress granules in response to arsenite treatment in a MAPKAPK2-dependent manner and does not prevent CCR4-NOT deadenylase complex recruitment or ZFP36-induced ARE-containing mRNA deadenylation and decay processes. Interacts with 14-3-3 proteins; these interactions occur in response to rapamycin in an Akt-dependent manner. Interacts with AGO2 and AGO4. Interacts (via C-terminus) with CNOT1; this interaction occurs in a RNA-independent manner and induces mRNA deadenylation. Interacts (via N-terminus) with CNOT6. Interacts with CNOT6L. Interacts (via C-terminus) with CNOT7; this interaction occurs in a RNA-independent manner, induces mRNA deadenylation and is inhibited in a phosphorylation MAPKAPK2-dependent manner. Interacts (via unphosphorylated form) with CNOT8; this interaction occurs in a RNA-independent manner and is inhibited in a phosphorylation MAPKAPK2-dependent manner. Interacts with DCP1A. Interacts (via N-terminus) with DCP2. Interacts with EDC3. Interacts (via N-terminus) with EXOSC2. Interacts with heat shock 70 kDa proteins. Interacts with KHSRP; this interaction increases upon cytokine-induced treatment. Interacts with MAP3K4; this interaction enhances the association with SH3KBP1/CIN85. Interacts with MAPKAPK2; this interaction occurs upon skeletal muscle satellite cell activation. Interacts with NCL. Interacts with NUP214; this interaction increases upon lipopolysaccharide (LPS) stimulation. Interacts with PABPC1; this interaction occurs in a RNA-dependent manner. Interacts (via hypophosphorylated form) with PABPN1 (via RRM domain and C-terminal arginine-rich region); this interaction occurs in the nucleus in a RNA-independent manner, decreases in presence of single-stranded poly(A) RNA-oligomer and in a p38 MAPK-dependent-manner and inhibits nuclear poly(A) tail synthesis. Interacts with PAN2. Interacts (via C3H1-type zinc finger domains) with PKM. Interacts (via C3H1-type zinc finger domains) with nuclear RNA poly(A) polymerase. Interacts with PPP2CA; this interaction occurs in LPS-stimulated cells and induces ZFP36 dephosphorylation, and hence may promote ARE-containing mRNAs decay. Interacts (via C-terminus) with PRR5L (via C-terminus); this interaction may accelerate ZFP36-mediated mRNA decay during stress. Interacts (via C-terminus) with SFN; this interaction occurs in a phosphorylation-dependent manner. Interacts (via extreme C-terminal region) with SH3KBP1/CIN85 (via SH3 domains); this interaction enhances MAP3K4-induced phosphorylation of ZFP36 at Ser-58 and Ser-85 and does not alter neither ZFP36 binding to ARE-containing transcripts nor TNF-alpha mRNA decay. Interacts with XRN1. Interacts (via C-terminus and Ser-178 phosphorylated form) with YWHAB; this interaction occurs in a p38/MAPKAPK2-dependent manner, increases cytoplasmic localization of ZFP36 and protects ZFP36 from Ser-178 dephosphorylation by serine/threonine phosphatase 2A, and hence may be crucial for stabilizing ARE-containing mRNAs. Interacts (via phosphorylated form) with YWHAE. Interacts (via C-terminus) with YWHAG; this interaction occurs in a phosphorylation-dependent manner. Interacts with YWHAH; this interaction occurs in a phosphorylation-dependent manner. Interacts with YWHAQ; this interaction occurs in a phosphorylation-dependent manner. Interacts with (via C-terminus) YWHAZ; this interaction occurs in a phosphorylation-dependent manner. Does not interact with SH3KBP1. Interacts (via the 4EHP-binding motif) with EIF4E2; the interaction is direct. Interacts (via P-P-P-P-G repeats) with GIGYF2; the interaction is direct. Post-translationally, phosphorylated. Phosphorylation at serine and/or threonine residues occurs in a p38 MAPK- and MAPKAPK2-dependent manner. Phosphorylated by MAPKAPK2 at Ser-52 and Ser-178; phosphorylation increases its stability and cytoplasmic localization, promotes binding to 14-3-3 adapter proteins and inhibits the recruitment of cytoplasmic CCR4-NOT and PAN2-PAN3 deadenylase complexes to the mRNA decay machinery, thereby inhibiting ZFP36-induced ARE-containing mRNA deadenylation and decay processes. Phosphorylation by MAPKAPK2 does not impair ARE-containing RNA-binding. Phosphorylated in a MAPKAPK2- and p38 MAPK-dependent manner upon skeletal muscle satellite cell activation; this phosphorylation inhibits ZFP36-mediated mRNA decay activity, and hence stabilizes MYOD1 mRNA. Phosphorylated by MAPK1 upon mitogen stimulation. Phosphorylated at Ser-58 and Ser-85; these phosphorylations increase in a SH3KBP1-dependent manner. Phosphorylated at serine and threonine residues in a pyruvate kinase PKM- and p38 MAPK-dependent manner. Phosphorylation at Ser-52 may participate in the PKM-mediated degradation of ZFP36 in a p38 MAPK-dependent manner. Dephosphorylated by serine/threonine phosphatase 2A at Ser-178. Ubiquitinated; pyruvate kinase (PKM)-dependent ubiquitination leads to proteasomal degradation through a p38 MAPK signaling pathway. Expressed in skeletal muscle satellite cells. Strongly expressed in differentiated adipocytes compared to preadipocytes (at protein level). Expressed in embryonic stem cells (ESCs). Expressed in heart, placenta, kidney, intestine, liver, lung, thymus, fat and spleen.

It is found in the nucleus. It localises to the cytoplasm. Its subcellular location is the cytoplasmic granule. The protein resides in the P-body. Its function is as follows. Zinc-finger RNA-binding protein that destabilizes numerous cytoplasmic AU-rich element (ARE)-containing mRNA transcripts by promoting their poly(A) tail removal or deadenylation, and hence provide a mechanism for attenuating protein synthesis. Acts as an 3'-untranslated region (UTR) ARE mRNA-binding adapter protein to communicate signaling events to the mRNA decay machinery. Recruits deadenylase CNOT7 (and probably the CCR4-NOT complex) via association with CNOT1, and hence promotes ARE-mediated mRNA deadenylation. Also functions by recruiting components of the cytoplasmic RNA decay machinery to the bound ARE-containing mRNAs. Self-regulates by destabilizing its own mRNA. Binds to 3'-UTR ARE of numerous mRNAs and of its own mRNA. Plays a role in anti-inflammatory responses; suppresses tumor necrosis factor (TNF)-alpha production by stimulating ARE-mediated TNF-alpha mRNA decay and several other inflammatory ARE-containing mRNAs in interferon (IFN)- and/or lipopolysaccharide (LPS)-induced macrophages. Also plays a role in the regulation of dendritic cell maturation at the post-transcriptional level, and hence operates as part of a negative feedback loop to limit the inflammatory response. Promotes ARE-mediated mRNA decay of hypoxia-inducible factor HIF1A mRNA during the response of endothelial cells to hypoxia. Positively regulates early adipogenesis of preadipocytes by promoting ARE-mediated mRNA decay of immediate early genes (IEGs). Negatively regulates hematopoietic/erythroid cell differentiation by promoting ARE-mediated mRNA decay of the transcription factor STAT5B mRNA. Plays a role in maintaining skeletal muscle satellite cell quiescence by promoting ARE-mediated mRNA decay of the myogenic determination factor MYOD1 mRNA. Also associates with and regulates the expression of non-ARE-containing target mRNAs at the post-transcriptional level, such as MHC class I mRNAs. Participates in association with argonaute RISC catalytic components in the ARE-mediated mRNA decay mechanism; assists microRNA (miRNA) targeting ARE-containing mRNAs. May also play a role in the regulation of cytoplasmic mRNA decapping; enhances decapping of ARE-containing RNAs, in vitro. Involved in the delivery of target ARE-mRNAs to processing bodies (PBs). In addition to its cytosolic mRNA-decay function, affects nuclear pre-mRNA processing. Negatively regulates nuclear poly(A)-binding protein PABPN1-stimulated polyadenylation activity on ARE-containing pre-mRNA during LPS-stimulated macrophages. Also involved in the regulation of stress granule (SG) and P-body (PB) formation and fusion. Plays a role in the regulation of keratinocyte proliferation, differentiation and apoptosis. Plays a role as a tumor suppressor by inhibiting cell proliferation in breast cancer cells. The protein is mRNA decay activator protein ZFP36 of Mus musculus (Mouse).